The following is a 389-amino-acid chain: Large envelope protein (389 aa).

An N-acetylmethionine modification is found at methionine 1. Glycine 2 carries N-myristoyl glycine; by host lipidation. The pre-S1 stretch occupies residues 2–108 (GQNLSTSNPL…PPLRDTHPQA (107 aa)). The segment at 2–163 (GQNLSTSNPL…FSRTGDPAPN (162 aa)) is pre-S. Topologically, residues 2 to 170 (GQNLSTSNPL…APNMESITSG (169 aa)) are virion surface; in external conformation. At 2–242 (GQNLSTSNPL…PGYRWMCLRR (241 aa)) the chain is on the intravirion; in internal conformation side. The segment at 73–99 (IITTVPANPPPASTNRQSGRKPTPISP) is disordered. The tract at residues 109–163 (MHWNSTTFHQALQDPRVRGLYFPAGGSSSGTAYPVPDTASHISSIFSRTGDPAPN) is pre-S2. The helical transmembrane segment at 171 to 191 (FLGPLLVLQAGFFLLTKILTI) threads the bilayer. At 192 to 242 (PQSLDSWWTSLNFLGGAPVCLGQNSQSPTSNHSPTSCPPICPGYRWMCLRR) the chain is on the intravirion; in external conformation side. The helical transmembrane segment at 243–263 (FIIFLFILLLCLIFLLVLLDY) threads the bilayer. Over 264–337 (QGMLPVCPLI…WASVRFSWLS (74 aa)) the chain is Virion surface. Residue asparagine 309 is glycosylated (N-linked (GlcNAc...) asparagine; by host). A helical transmembrane segment spans residues 338-358 (LLAPFVQWFAGLSPTVWLSVI). Topologically, residues 359–364 (WMMWYW) are intravirion. A helical membrane pass occupies residues 365 to 387 (GPNLYNILSPFIPLLPIFFCLWV). Topologically, residues 388 to 389 (YI) are virion surface.

This sequence belongs to the orthohepadnavirus major surface antigen family. In terms of assembly, in its internal form (Li-HBsAg), interacts with the capsid protein and with the isoform S. Interacts with host chaperone CANX. As to quaternary structure, associates with host chaperone CANX through its pre-S2 N glycan; this association may be essential for isoform M proper secretion. Interacts with isoform L. Interacts with the antigens of satellite virus HDV (HDVAgs); this interaction is required for encapsidation of HDV genomic RNA. Isoform M is N-terminally acetylated by host at a ratio of 90%, and N-glycosylated by host at the pre-S2 region. Post-translationally, myristoylated.

Its subcellular location is the virion membrane. In terms of biological role, the large envelope protein exists in two topological conformations, one which is termed 'external' or Le-HBsAg and the other 'internal' or Li-HBsAg. In its external conformation the protein attaches the virus to cell receptors and thereby initiating infection. This interaction determines the species specificity and liver tropism. This attachment induces virion internalization predominantly through caveolin-mediated endocytosis. The large envelope protein also assures fusion between virion membrane and endosomal membrane. In its internal conformation the protein plays a role in virion morphogenesis and mediates the contact with the nucleocapsid like a matrix protein. Its function is as follows. The middle envelope protein plays an important role in the budding of the virion. It is involved in the induction of budding in a nucleocapsid independent way. In this process the majority of envelope proteins bud to form subviral lipoprotein particles of 22 nm of diameter that do not contain a nucleocapsid. This chain is Large envelope protein, found in Gorilla gorilla (western gorilla).